The chain runs to 1420 residues: DNA-directed RNA polymerase subunit beta' (1420 aa).

4 residues coordinate Zn(2+): C70, C72, C85, and C88. 3 residues coordinate Mg(2+): D464, D466, and D468. C823, C897, C904, and C907 together coordinate Zn(2+).

Belongs to the RNA polymerase beta' chain family. In terms of assembly, the RNAP catalytic core consists of 2 alpha, 1 beta, 1 beta' and 1 omega subunit. When a sigma factor is associated with the core the holoenzyme is formed, which can initiate transcription. It depends on Mg(2+) as a cofactor. Requires Zn(2+) as cofactor.

It carries out the reaction RNA(n) + a ribonucleoside 5'-triphosphate = RNA(n+1) + diphosphate. DNA-dependent RNA polymerase catalyzes the transcription of DNA into RNA using the four ribonucleoside triphosphates as substrates. This is DNA-directed RNA polymerase subunit beta' from Polynucleobacter necessarius subsp. necessarius (strain STIR1).